The primary structure comprises 494 residues: Neuronal acetylcholine receptor subunit alpha-6 (494 aa).

A signal peptide spans 1–30; it reads MLNSRDQGNLHSGLCLWLCGFLALFKGSTG. Residues 31 to 240 are Extracellular-facing; it reads CESEEQLFHR…TYSFYIRRLP (210 aa). Residues N54 and N171 are each glycosylated (N-linked (GlcNAc...) asparagine). Intrachain disulfides connect C158/C172 and C222/C223. The next 3 helical transmembrane spans lie at 241–265, 272–290, and 306–327; these read MFYT…FYLP, VTLC…LVIT, and YLLF…VLNI. At 328–465 the chain is on the cytoplasmic side; the sequence is HYRTPATHTM…WKYMAMVVDR (138 aa). The disordered stretch occupies residues 399 to 423; that stretch reads QKSSDIAPGKRRSSQQPARWVAENS. Position 401 is a phosphoserine (S401). The chain crosses the membrane as a helical span at residues 466–485; it reads VFLWVFIIVCVFGTVGLFLQ.

It belongs to the ligand-gated ion channel (TC 1.A.9) family. Acetylcholine receptor (TC 1.A.9.1) subfamily. Alpha-6/CHRNA6 sub-subfamily. Neuronal AChR is composed of two different types of subunits: alpha and non-alpha (beta). CHRNA6/alpha-6 subunit can be combined to CHRNB2/beta-2 and CHRNA4/alpha-4 to give rise to functional receptors. Interacts with LYPD6. Predominantly expressed in only a few brain areas, including dopaminergic neurons, norepirephrine neurons and cells of the visual system.

It localises to the synaptic cell membrane. The catalysed reaction is K(+)(in) = K(+)(out). It carries out the reaction Na(+)(in) = Na(+)(out). It catalyses the reaction Ca(2+)(in) = Ca(2+)(out). Activated by a myriad of ligands such as acetylcholine, cytisine and nicotine. CHRNA6 nAChR activity is inhibited by the antagonists alpha-conotoxin MII and PIA, a small disulfide-constrained peptides from cone snails. Component of neuronal acetylcholine receptors (nAChRs) that function as pentameric, ligand-gated cation channels with high calcium permeability among other activities. nAChRs are excitatory neurotrasnmitter receptors formed by a collection of nAChR subunits known to mediate synaptic transmission in the nervous system and the neuromuscular junction. Each nAchR subunit confers differential attributes to channel properties, including activation, deactivation and desensitization kinetics, pH sensitivity, cation permeability, and binding to allosteric modulators. CHRNA6 forms pentameric channels with CHRNB2 and CHRNA4 that exhibit high sensitivity to ACh and nicotine and are predominantly expressed in only a few brain areas, including dopaminergic neurons, norepirephrine neurons and cells of the visual system. nAChrs containing CHRNA6 subunits mediate endogenous cholinergic modulation of dopamine and gamma-aminobutyric acid (GABA) release in response to nicotine at nerve terminals. This Mus musculus (Mouse) protein is Neuronal acetylcholine receptor subunit alpha-6 (Chrna6).